The following is a 132-amino-acid chain: Small ribosomal subunit protein uS8 (132 aa).

This sequence belongs to the universal ribosomal protein uS8 family. In terms of assembly, part of the 30S ribosomal subunit. Contacts proteins S5 and S12.

Functionally, one of the primary rRNA binding proteins, it binds directly to 16S rRNA central domain where it helps coordinate assembly of the platform of the 30S subunit. In Francisella tularensis subsp. tularensis (strain FSC 198), this protein is Small ribosomal subunit protein uS8.